The primary structure comprises 498 residues: Probable malate:quinone oxidoreductase (498 aa).

The protein belongs to the MQO family. FAD is required as a cofactor.

The enzyme catalyses (S)-malate + a quinone = a quinol + oxaloacetate. Its pathway is carbohydrate metabolism; tricarboxylic acid cycle; oxaloacetate from (S)-malate (quinone route): step 1/1. This is Probable malate:quinone oxidoreductase from Granulibacter bethesdensis (strain ATCC BAA-1260 / CGDNIH1).